The primary structure comprises 440 residues: Syntrophin-1 (440 aa).

2 consecutive PH domains span residues 2–208 (AAVR…ACTT) and 227–340 (QVRH…IGGY). One can recognise a PDZ domain in the interval 45–128 (TVRVVKYDGN…VVDLQVQYRR (84 aa)). An SU domain is found at 384–440 (SFETIRATGDDGGRFLWVDFGPPHGEQELDLLNSAKPVVFILHSFLATKVYRLGLYA).

The protein belongs to the syntrophin family. Component of the dystrophin glycoprotein complex (DGC). Interacts with dyb-1, dys-1 and snf-6 to form the DGC. As to expression, expressed in neurons and muscles; particularly strong expression in the body wall, head and vulval muscles, and in ventral nerve cord (at protein level).

It localises to the membrane. It is found in the cytoplasm. The protein resides in the cytoskeleton. Adapter protein that binds to and probably organizes the subcellular localization of a variety of membrane proteins. May link various receptors to the actin cytoskeleton and the dystrophin glycoprotein complex (DGC). May also act by slowing calcium channel activity via a direct or indirect mechanism potentially involving other second messengers. Plays an early role in the formation of the neuromuscular junction and is necessary for muscle maintenance. The chain is Syntrophin-1 from Caenorhabditis elegans.